Reading from the N-terminus, the 291-residue chain is Transmembrane protein 41B (291 aa).

Positions methionine 1–tyrosine 38 are disordered. Position 18 is a phosphothreonine (threonine 18). The span at glycine 21–glycine 34 shows a compositional bias: low complexity. A Phosphoserine modification is found at serine 35. The next 6 membrane-spanning stretches (helical) occupy residues methionine 52–tyrosine 72, phenylalanine 109–isoleucine 129, leucine 147–leucine 169, leucine 197–isoleucine 217, proline 225–isoleucine 245, and serine 262–phenylalanine 282. The VTT domain; required for its function in autophagy stretch occupies residues glycine 140 to leucine 251.

The protein belongs to the TMEM41 family. In terms of assembly, interacts with VMP1. Interacts with COPA, COPB1, VDAC1 and ERLIN2. Interacts with ATG2A. Interacts with SURF4.

The protein resides in the endoplasmic reticulum membrane. It is found in the endomembrane system. It catalyses the reaction a 1,2-diacyl-sn-glycero-3-phospho-L-serine(in) = a 1,2-diacyl-sn-glycero-3-phospho-L-serine(out). It carries out the reaction cholesterol(in) = cholesterol(out). The catalysed reaction is a 1,2-diacyl-sn-glycero-3-phosphocholine(in) = a 1,2-diacyl-sn-glycero-3-phosphocholine(out). The enzyme catalyses a 1,2-diacyl-sn-glycero-3-phosphoethanolamine(in) = a 1,2-diacyl-sn-glycero-3-phosphoethanolamine(out). Its function is as follows. Phospholipid scramblase involved in lipid homeostasis and membrane dynamics processes. Has phospholipid scramblase activity toward cholesterol and phosphatidylserine, as well as phosphatidylethanolamine and phosphatidylcholine. Required for autophagosome formation: participates in early stages of autophagosome biogenesis at the endoplasmic reticulum (ER) membrane by reequilibrating the leaflets of the ER as lipids are extracted by ATG2 (ATG2A or ATG2B) to mediate autophagosome assembly. In addition to autophagy, involved in other processes in which phospholipid scramblase activity is required. Required for normal motor neuron development. This is Transmembrane protein 41B from Pongo abelii (Sumatran orangutan).